The sequence spans 147 residues: Protein-export protein SecB (147 aa).

This sequence belongs to the SecB family. Homotetramer, a dimer of dimers. One homotetramer interacts with 1 SecA dimer.

Its subcellular location is the cytoplasm. In terms of biological role, one of the proteins required for the normal export of preproteins out of the cell cytoplasm. It is a molecular chaperone that binds to a subset of precursor proteins, maintaining them in a translocation-competent state. It also specifically binds to its receptor SecA. The chain is Protein-export protein SecB from Neisseria meningitidis serogroup B (strain ATCC BAA-335 / MC58).